The chain runs to 463 residues: uncharacterized protein (463 aa).

A PE domain is found at 1 to 93; it reads MSYMIAVPDM…AGAYASAEAT (93 aa). Disordered stretches follow at residues 231-320 and 408-463; these read GGAG…AGNG and NGGD…TPGQ. The span at 408 to 451 shows a compositional bias: gly residues; sequence NGGDGGKGGDAQLIGNGGNGGNGGKGGTGLMPGINGTGGAGGSR.

It belongs to the mycobacterial PE family. PGRS subfamily.

This is an uncharacterized protein from Mycobacterium tuberculosis (strain ATCC 25618 / H37Rv).